The primary structure comprises 92 residues: UPF0250 protein Avin_08440 (92 aa).

It belongs to the UPF0250 family.

The polypeptide is UPF0250 protein Avin_08440 (Azotobacter vinelandii (strain DJ / ATCC BAA-1303)).